Reading from the N-terminus, the 271-residue chain is Mannosyl-3-phosphoglycerate phosphatase (271 aa).

The Nucleophile role is filled by Asp13. Mg(2+) contacts are provided by Asp13, Asp15, and Asp214.

The protein belongs to the HAD-like hydrolase superfamily. MPGP family. Mg(2+) is required as a cofactor.

Its subcellular location is the cytoplasm. It catalyses the reaction 2-O-(alpha-D-mannosyl)-3-phosphoglycerate + H2O = (2R)-2-O-(alpha-D-mannosyl)-glycerate + phosphate. The chain is Mannosyl-3-phosphoglycerate phosphatase from Escherichia coli O139:H28 (strain E24377A / ETEC).